The primary structure comprises 152 residues: Cell division protein SepF (152 aa).

A compositionally biased stretch (basic and acidic residues) spans 23–32 (EVAREPEPMQ). Positions 23 to 42 (EVAREPEPMQKKTKKEKPSK) are disordered.

It belongs to the SepF family. As to quaternary structure, homodimer. Interacts with FtsZ.

The protein localises to the cytoplasm. Functionally, cell division protein that is part of the divisome complex and is recruited early to the Z-ring. Probably stimulates Z-ring formation, perhaps through the cross-linking of FtsZ protofilaments. Its function overlaps with FtsA. This chain is Cell division protein SepF, found in Listeria innocua serovar 6a (strain ATCC BAA-680 / CLIP 11262).